We begin with the raw amino-acid sequence, 126 residues long: Fatty acid-binding protein 2, liver (126 aa).

Residues 54–56 (TPN), 99–101 (HIQ), and Arg-121 contribute to the cholate site.

The protein belongs to the calycin superfamily. Fatty-acid binding protein (FABP) family.

It is found in the cytoplasm. Functionally, binds free fatty acids and their coenzyme A derivatives, bilirubin, and some other small molecules in the cytoplasm. May be involved in intracellular lipid transport. The specificity of axolotl L-FABP differs from that of LB-FABP. Binds 2 ligands per protein molecule. The polypeptide is Fatty acid-binding protein 2, liver (Ambystoma mexicanum (Axolotl)).